The chain runs to 245 residues: LOB domain-containing protein 16 (245 aa).

One can recognise an LOB domain in the interval 14–116 (SPCGACKFLR…SQVMQMKAQI (103 aa)). Positions 162-183 (YYGHVNPNNPVSPQSSLEESFS) are disordered.

The protein belongs to the LOB domain-containing protein family. Homodimer and heterodimer with LBD18. As to expression, expressed in roots and faintly in shoots.

The protein resides in the nucleus. In terms of biological role, transcriptional activator. Involved in lateral root formation. Regulated by the transcriptional activators ARF7 and ARF19. Functions in the initiation and emergence of lateral roots, in conjunction with LBD18, downstream of ARF7 and ARF19. Acts downstream of the auxin influx carriers AUX1 and LAX1 in the regulation of lateral root initiation and development. This is LOB domain-containing protein 16 (LBD16) from Arabidopsis thaliana (Mouse-ear cress).